Here is a 359-residue protein sequence, read N- to C-terminus: DNA replication and repair protein RecF (359 aa).

30 to 37 (GKNGIGKT) is a binding site for ATP.

This sequence belongs to the RecF family.

The protein resides in the cytoplasm. Functionally, the RecF protein is involved in DNA metabolism; it is required for DNA replication and normal SOS inducibility. RecF binds preferentially to single-stranded, linear DNA. It also seems to bind ATP. The chain is DNA replication and repair protein RecF from Flavobacterium johnsoniae (strain ATCC 17061 / DSM 2064 / JCM 8514 / BCRC 14874 / CCUG 350202 / NBRC 14942 / NCIMB 11054 / UW101) (Cytophaga johnsonae).